The chain runs to 285 residues: UstYa family oxidase phomYe (285 aa).

A helical transmembrane segment spans residues 32–54; sequence LFYGWKGIAFLSTLTNVLFISGF. The tract at residues 143–165 is disordered; that stretch reads YGFGTPLTGPGSEGNEHDPTPWT. The HXXHC 1 motif lies at 177-181; it reads HQLHC. An N-linked (GlcNAc...) asparagine glycan is attached at N202. The short motif at 209 to 213 is the HXXHC 2 element; that stretch reads HVDHC.

The protein belongs to the ustYa family.

It is found in the membrane. Its pathway is mycotoxin biosynthesis. Its function is as follows. UstYa family oxidase; part of the gene cluster that mediates the biosynthesis of the phomopsins, a group of hexapeptide mycotoxins which infects lupins and causes lupinosis disease in livestock. Within the pathway, phomYe catalyzes the desaturation of the Pro moiety into 3,4-dehydroproline (dPro). The pathway starts with the processing of the precursor phomA by several endopeptidases including kexin proteases as well as the cluster-specific S41 family peptidase phomP1 and the oligopeptidase phomG to produce 10 identical copies of the hexapeptide Tyr-Val-Ile-Pro-Ile-Asp. After being excised from the precursor peptide, the core peptides are cyclized and modified post-translationally by enzymes encoded within the gene cluster. The timing and order of proteolysis of the phomA precursor and PTMs are still unknown. Two tyrosinase-like enzymes, phomQ1 and phomQ2, catalyze the chlorination and hydroxylation of Tyr, respectively. PhomYb, is proposed to be involved in the construction of the macrocyclic structure. The other 4 ustYa family proteins may be involved in PTMs that generate the unique structure of phomopsin A. PhomYa is required for the hydroxylation of C-beta of Tyr. PhomYc, phomYd, and phomYe are responsible for the biosynthesis of 2,3-dehydroisoleucine (dIle), 2,3-dehydroaspartic acid (dAsp), and 3,4-dehydroproline (dPro), respectively. While dIle formation by phomYc is indispensable for the installation of dAsp by phomYd, the order of the other PTMs have not been elucidated yet. Most of the biosynthetic enzymes likely have broad substrate specificity, and thus, there might be a metabolic grid from a precursor to phomopsin A. The enzyme(s) responsible for the biosynthesis of 3,4-dehydrovaline (dVal) have also not been identified yet. Finally, phomM acts as an S-adenosylmethionine-dependent alpha-N-methyltransferase that catalyzes two successive N-methylation reactions, converting N-desmethyl-phomopsin A to phomopsin A and phomopsin A further to an N,N-dimethylated congener called phomopsin E. The polypeptide is UstYa family oxidase phomYe (Diaporthe leptostromiformis (Lupinosis disease fungus)).